A 186-amino-acid polypeptide reads, in one-letter code: MSEGVDLKELKRRMDGAIAAFKHDIASLRTGRASANVLDPVTVEAYGSRMPLNQVANITVPESRMLSVSVWDKSMVGAVERAIRESNLGLNPIVDGQNLRIPLPELNEERRKSLVKVAHDYAEKSKVAVRHVRRDGMDDLKKAEKDGEIGQDESRAQSERVQKMTDDVISEIDRLLAEKEKEIMQV.

The segment at 135-164 (DGMDDLKKAEKDGEIGQDESRAQSERVQKM) is disordered.

It belongs to the RRF family.

The protein resides in the cytoplasm. Functionally, responsible for the release of ribosomes from messenger RNA at the termination of protein biosynthesis. May increase the efficiency of translation by recycling ribosomes from one round of translation to another. The polypeptide is Ribosome-recycling factor (Rhizobium meliloti (strain 1021) (Ensifer meliloti)).